A 61-amino-acid chain; its full sequence is Small ribosomal subunit protein uS14 (61 aa).

Zn(2+)-binding residues include C24, C27, C40, and C43.

This sequence belongs to the universal ribosomal protein uS14 family. Zinc-binding uS14 subfamily. In terms of assembly, part of the 30S ribosomal subunit. Contacts proteins S3 and S10. The cofactor is Zn(2+).

Functionally, binds 16S rRNA, required for the assembly of 30S particles and may also be responsible for determining the conformation of the 16S rRNA at the A site. In Thermoanaerobacter sp. (strain X514), this protein is Small ribosomal subunit protein uS14.